Here is a 316-residue protein sequence, read N- to C-terminus: Ester hydrolase C11orf54 homolog (316 aa).

Zn(2+) contacts are provided by His-267, His-269, and His-279.

Monomer. It depends on Zn(2+) as a cofactor.

It localises to the nucleus. It is found in the cytoplasm. Exhibits ester hydrolase activity on the substrate p-nitrophenyl acetate, in vitro. May regulate DNA damage and repair by regulating HIF1A degradation via chaperone-mediated autophagy (CMA). The sequence is that of Ester hydrolase C11orf54 homolog from Xenopus laevis (African clawed frog).